The following is a 461-amino-acid chain: Argininosuccinate lyase (461 aa).

This sequence belongs to the lyase 1 family. Argininosuccinate lyase subfamily.

The protein localises to the cytoplasm. The catalysed reaction is 2-(N(omega)-L-arginino)succinate = fumarate + L-arginine. It participates in amino-acid biosynthesis; L-arginine biosynthesis; L-arginine from L-ornithine and carbamoyl phosphate: step 3/3. The chain is Argininosuccinate lyase from Chloroflexus aurantiacus (strain ATCC 29366 / DSM 635 / J-10-fl).